Reading from the N-terminus, the 289-residue chain is Protein SET (289 aa).

The tract at residues 1–42 (MAPKRQSAILPQPKKPRPVAAPKLEDKSASPGLPKGEKEQQE) is disordered. Ala-2 carries the post-translational modification N,N,N-trimethylalanine. Phosphoserine is present on Ser-7. Residue Pro-11 is modified to N6-acetyllysine. A Phosphoserine modification is found at Lys-15. Lys-23 is modified (N6-acetyllysine). Phosphoserine occurs at positions 24, 28, and 62. Positions 31-77 (PGLPKGEKEQQEAIEHIDEVQNEIDRLNEQASEEILKVEQKYNKLRQ) are dimerization. Residue Lys-67 is modified to N6-acetyllysine. The segment at 78 to 224 (PFFQKRSELI…ELGEVIKDDI (147 aa)) is earmuff domain. Residue Tyr-145 is modified to Phosphotyrosine. Lys-149 carries the post-translational modification N6-acetyllysine. Lys-153 participates in a covalent cross-link: Glycyl lysine isopeptide (Lys-Gly) (interchain with G-Cter in ubiquitin). Disordered regions lie at residues 157–206 (LNES…TWFT) and 235–289 (PDMD…GEDD). The span at 168-180 (TEIKWKSGKDLTK) shows a compositional bias: basic and acidic residues. Lys-171 carries the post-translational modification N6-acetyllysine. Positions 236-289 (DMDDEEGEAEDDDDDDEEEEGLEDIDEEGDEDEGEEDDDEDEGEEGEEDEGEDD) are enriched in acidic residues.

Belongs to the nucleosome assembly protein (NAP) family. Headphone-shaped homodimer. Isoform 1 and isoform 2 interact directly with each other and with ANP32A within the tripartite INHAT (inhibitor of acetyltransferases) complex. Isoform 1 and isoform 2 interact also with histones. Isoform 2 is a omponent of the SET complex, composed of at least ANP32A, APEX1, HMGB2, NME1, SET and TREX1, but not NME2 or TREX2. Within this complex, directly interacts with ANP32A, NME1, HMGB2 and TREX1; the interaction with ANP32A is enhanced after cleavage. Interacts with APBB1, CHTOP, SETBP1, SGO1. Post-translationally, isoform 2 is phosphorylated on Ser-15 and Ser-24. In terms of processing, isoform 2 is acetylated on Lys-11. Some glutamate residues are glycylated by TTLL8. This modification occurs exclusively on glutamate residues and results in a glycine chain on the gamma-carboxyl group. Post-translationally, N-terminus of isoform 1 is methylated by METTL11A/NTM1. Mainly trimethylated. In terms of processing, cleaved after Lys-176 by GZMA. The cleavage inhibits its nucleosome assembly activity and disrupts the inhibition on NME1. Widely expressed, with higher expression in brain, thymus, spleen and bone marrow, and lower expression in heart, liver and muscle.

It is found in the cytoplasm. Its subcellular location is the cytosol. The protein resides in the endoplasmic reticulum. The protein localises to the nucleus. It localises to the nucleoplasm. Its function is as follows. Multitasking protein, involved in apoptosis, transcription, nucleosome assembly and histone chaperoning. Isoform 2 anti-apoptotic activity is mediated by inhibition of the GZMA-activated DNase, NME1. In the course of cytotoxic T-lymphocyte (CTL)-induced apoptosis, GZMA cleaves SET, disrupting its binding to NME1 and releasing NME1 inhibition. Isoform 1 and isoform 2 are potent inhibitors of protein phosphatase 2A. Isoform 1 and isoform 2 inhibit EP300/CREBBP and PCAF-mediated acetylation of histones (HAT) and nucleosomes, most probably by masking the accessibility of lysines of histones to the acetylases. The predominant target for inhibition is histone H4. HAT inhibition leads to silencing of HAT-dependent transcription and prevents active demethylation of DNA. Both isoforms stimulate DNA replication of the adenovirus genome complexed with viral core proteins; however, isoform 2 specific activity is higher. The protein is Protein SET (Set) of Rattus norvegicus (Rat).